Reading from the N-terminus, the 217-residue chain is Large ribosomal subunit protein uL1 (217 aa).

It belongs to the universal ribosomal protein uL1 family. Component of the large ribosomal subunit (LSU). Mature ribosomes consist of a small (40S) and a large (60S) subunit. The 40S subunit contains about 32 different proteins and 1 molecule of RNA (18S). The 60S subunit contains 45 different proteins and 3 molecules of RNA (25S, 5.8S and 5S). uL1 forms part of the L1 stalk.

It localises to the cytoplasm. Its function is as follows. Component of the ribosome, a large ribonucleoprotein complex responsible for the synthesis of proteins in the cell. The small ribosomal subunit (SSU) binds messenger RNAs (mRNAs) and translates the encoded message by selecting cognate aminoacyl-transfer RNA (tRNA) molecules. The large subunit (LSU) contains the ribosomal catalytic site termed the peptidyl transferase center (PTC), which catalyzes the formation of peptide bonds, thereby polymerizing the amino acids delivered by tRNAs into a polypeptide chain. The nascent polypeptides leave the ribosome through a tunnel in the LSU and interact with protein factors that function in enzymatic processing, targeting, and the membrane insertion of nascent chains at the exit of the ribosomal tunnel. uL1 forms part of the L1 stalk, a mobile element that plays a role in evacuating the exit-site tRNA. The polypeptide is Large ribosomal subunit protein uL1 (RPL10A) (Candida albicans (strain SC5314 / ATCC MYA-2876) (Yeast)).